The sequence spans 1047 residues: UPF0182 protein Mlut_14990 (1047 aa).

Composition is skewed to gly residues over residues 1 to 27 (MSFG…GQSG) and 49 to 59 (GPGGPFGGGGS). The segment at 1 to 66 (MSFGQGGGGP…GGSSAARGRG (66 aa)) is disordered. The next 7 membrane-spanning stretches (helical) occupy residues 71–91 (PSAL…FVVF), 114–134 (VLAK…AVWL), 168–188 (LVFL…AMNG), 214–234 (FFMA…SVVL), 266–286 (AHIG…FWLN), 314–334 (AILA…VVSG), and 341–361 (IGTA…PFIV). Disordered regions lie at residues 544 to 568 (GAPA…TFSG), 941 to 965 (GDSG…PTAP), and 1007 to 1047 (EALK…TPSG). Residues 555–565 (TADSQEDTAYT) are compositionally biased toward polar residues. Low complexity predominate over residues 1015–1037 (ADDALGGDAPAQEQAPAEASPAP). The segment covering 1038 to 1047 (SSSPSPTPSG) has biased composition (pro residues).

It belongs to the UPF0182 family.

Its subcellular location is the cell membrane. The protein is UPF0182 protein Mlut_14990 of Micrococcus luteus (strain ATCC 4698 / DSM 20030 / JCM 1464 / CCM 169 / CCUG 5858 / IAM 1056 / NBRC 3333 / NCIMB 9278 / NCTC 2665 / VKM Ac-2230) (Micrococcus lysodeikticus).